The following is a 110-amino-acid chain: uncharacterized protein (110 aa).

Residues 1-16 (MKKILLIASMTAGLTA) form the signal peptide. C17 is lipidated: N-palmitoyl cysteine. C17 is lipidated: S-diacylglycerol cysteine.

The protein resides in the cell membrane. This is an uncharacterized protein from Salmonella typhimurium (strain LT2 / SGSC1412 / ATCC 700720).